The chain runs to 321 residues: Anthranilate phosphoribosyltransferase (321 aa).

5-phospho-alpha-D-ribose 1-diphosphate contacts are provided by residues G72, 75 to 76 (GD), T80, 82 to 85 (NVST), 99 to 107 (KHGNVSITS), and S111. Residue G72 participates in anthranilate binding. A Mg(2+)-binding site is contributed by S84. An anthranilate-binding site is contributed by N102. Position 157 (R157) interacts with anthranilate. Positions 216 and 217 each coordinate Mg(2+).

It belongs to the anthranilate phosphoribosyltransferase family. In terms of assembly, homodimer. Requires Mg(2+) as cofactor.

The catalysed reaction is N-(5-phospho-beta-D-ribosyl)anthranilate + diphosphate = 5-phospho-alpha-D-ribose 1-diphosphate + anthranilate. The protein operates within amino-acid biosynthesis; L-tryptophan biosynthesis; L-tryptophan from chorismate: step 2/5. Its function is as follows. Catalyzes the transfer of the phosphoribosyl group of 5-phosphorylribose-1-pyrophosphate (PRPP) to anthranilate to yield N-(5'-phosphoribosyl)-anthranilate (PRA). This Methanococcus maripaludis (strain C7 / ATCC BAA-1331) protein is Anthranilate phosphoribosyltransferase.